We begin with the raw amino-acid sequence, 302 residues long: MSVFIDKNTKVMVQGITGSTALFHTKQMLDYGTQIVAGVTPGKGGQVVEGVPVYNTVEEAKNETGANVSVVYVPAPFAADSIIEAADADLDMVICITEHIPVVDMVKVKRYLQGRKTRLVGPNCPGVITADECKIGIMPGYIHKKGHVGVVSRSGTLTYEAVHQLTEEGIGQTTAVGIGGDPVNGTNFIDVLKAFNEDSETKAVVMIGEIGGTAEEEAAQWIKENMNKPVVGFIGGQTAPPGKRMGHAGAIISGGKGTASEKIKTLNDCGVETADTPSEIGTTLIDAAKKAGIYEELLTIKK.

CoA is bound by residues 17 to 20, Lys-43, and 96 to 98; these read TGST and ITE. A substrate-binding site is contributed by Tyr-159. His-247 (tele-phosphohistidine intermediate) is an active-site residue.

The protein belongs to the succinate/malate CoA ligase alpha subunit family. As to quaternary structure, heterotetramer of two alpha and two beta subunits.

It catalyses the reaction succinate + ATP + CoA = succinyl-CoA + ADP + phosphate. The catalysed reaction is GTP + succinate + CoA = succinyl-CoA + GDP + phosphate. The protein operates within carbohydrate metabolism; tricarboxylic acid cycle; succinate from succinyl-CoA (ligase route): step 1/1. Functionally, succinyl-CoA synthetase functions in the citric acid cycle (TCA), coupling the hydrolysis of succinyl-CoA to the synthesis of either ATP or GTP and thus represents the only step of substrate-level phosphorylation in the TCA. The alpha subunit of the enzyme binds the substrates coenzyme A and phosphate, while succinate binding and nucleotide specificity is provided by the beta subunit. The protein is Succinate--CoA ligase [ADP-forming] subunit alpha of Staphylococcus epidermidis (strain ATCC 35984 / DSM 28319 / BCRC 17069 / CCUG 31568 / BM 3577 / RP62A).